The primary structure comprises 704 residues: MNEKKVYSYEWAGRPLVIEVGQLAKQANGAVLVRYGDTSVLSTATMSKSPKPLDFFPLTVNYEERLYAAGKIPGGFIKREGRPSEKAILASRLIDRPIRPMFPDGFRNEVQVISMVMSNDSDCTSEMAAMVGSSLALAISDIPFDGPIAGVQVGYIDGEFIVNPTVEQSNQSTIHLSVAGNKDAINMVEAGALEVPEEVMLEAIMFGHEEIKKIIAFQEQIVAEVGKEKKPVTLFEIDEAIQADIKAACETDMHDAIQTAEKHARDEAIQAVKDRIIASYEEQEADDDTMKQVYTILDKMVKDEVRRQITEDKIRPDGRKLDEIRPLSSETGLLQRTHGSGLFTRGQTQALSICTLGALGDVQIIDGLGVEESKRFMHHYNFPQFSVGETGPIRGPGRREIGHGALGERALEAVIPDESVFPYTIRCVSEVLESNGSTSQASICASTLAMMDAGVPLKAPVAGIAMGLIKKGEHYSILTDIQGMEDHLGDMDFKVAGTAKGVTALQMDIKIDGLSRNILEEALTQAKVGRMHILESMLATLAEPRKQLSEFAPKIVIVKINPDKIRDVIGPGGKQINKIIEETGVKIDTEQDGTIYISSANEEMNARAKQIIEDIVREAKVGEYYLSTVKRIEKFGAFCEIFPGKDGLLHISEIQEERTKQVEDVLKLGDQLLVKVIEIDKQGRVNLSRKVVLQEEKERAEQQK.

The Mg(2+) site is built by Asp-486 and Asp-492. The KH domain occupies 553-612; that stretch reads PKIVIVKINPDKIRDVIGPGGKQINKIIEETGVKIDTEQDGTIYISSANEEMNARAKQII. One can recognise an S1 motif domain in the interval 622–690; sequence GEYYLSTVKR…KQGRVNLSRK (69 aa).

Belongs to the polyribonucleotide nucleotidyltransferase family. Mg(2+) is required as a cofactor.

It localises to the cytoplasm. The enzyme catalyses RNA(n+1) + phosphate = RNA(n) + a ribonucleoside 5'-diphosphate. Involved in mRNA degradation. Catalyzes the phosphorolysis of single-stranded polyribonucleotides processively in the 3'- to 5'-direction. In Lysinibacillus sphaericus (strain C3-41), this protein is Polyribonucleotide nucleotidyltransferase.